Reading from the N-terminus, the 456-residue chain is UDP-N-acetylmuramate--L-alanine ligase (456 aa).

117-123 (GTHGKTT) is a binding site for ATP.

The protein belongs to the MurCDEF family.

The protein resides in the cytoplasm. It carries out the reaction UDP-N-acetyl-alpha-D-muramate + L-alanine + ATP = UDP-N-acetyl-alpha-D-muramoyl-L-alanine + ADP + phosphate + H(+). Its pathway is cell wall biogenesis; peptidoglycan biosynthesis. Cell wall formation. The protein is UDP-N-acetylmuramate--L-alanine ligase of Clostridium tetani (strain Massachusetts / E88).